A 276-amino-acid chain; its full sequence is MAVVTMKQLLDSGTHFGHQTRRWNPKMKRFIFTDRNGIYIIDLQQTLTFIDKAYEFVKETVAHGGTVLFVGTKKQAQESIAAEATRVGMPYVNQRWLGGMLTNFSTVHKRLQRLKELEAMEQTGGFEGRTKKEILGLTREKNKLERSLGGIRDMSKVPSAIWVVDTNKEHIAVGEARKLGIPVIAILDTNCDPDEVDYPIPGNDDAIRSAALLTKVIASAVAEGLQARAGVGRGDGKPEVEAAEPLAEWEQELLASATATAAPTEAGAPEPTTDPS.

The interval 255-276 is disordered; it reads ASATATAAPTEAGAPEPTTDPS.

Belongs to the universal ribosomal protein uS2 family.

This Mycolicibacterium paratuberculosis (strain ATCC BAA-968 / K-10) (Mycobacterium paratuberculosis) protein is Small ribosomal subunit protein uS2.